Reading from the N-terminus, the 400-residue chain is DNA alpha-glucosyltransferase (400 aa).

In terms of assembly, interacts with clamp protein gp45.

It catalyses the reaction Transfers an alpha-D-glucosyl residue from UDP-glucose to a hydroxymethylcytosine residue in DNA.. The protein operates within genetic information processing; DNA modification. Functionally, catalyzes the transfer of glucose from uridine diphosphoglucose to 5-hydroxymethyl cytosine of T4 DNA to yield glucosyl 5-hydroxymethyl cytosine (glc-HMC). This DNA process seems to occur immediately after DNA synthesis since the DNA alpha-glucosyltransferase interacts with the clamp protein gp45. The glc-HMC modification protects the phage genome against its own nucleases and the host restriction endonuclease system. The glc-HMC modification also protects against the host CRISPR-Cas9 defense system. The sequence is that of DNA alpha-glucosyltransferase (agt) from Escherichia coli (Bacteriophage T4).